A 39-amino-acid polypeptide reads, in one-letter code: Photosystem II reaction center protein L (39 aa).

A helical transmembrane segment spans residues 18–38 (SLYLGLLLVAVLGILFSSYFF).

It belongs to the PsbL family. As to quaternary structure, PSII is composed of 1 copy each of membrane proteins PsbA, PsbB, PsbC, PsbD, PsbE, PsbF, PsbH, PsbI, PsbJ, PsbK, PsbL, PsbM, PsbT, PsbX, PsbY, PsbZ, Psb30/Ycf12, peripheral proteins PsbO, CyanoQ (PsbQ), PsbU, PsbV and a large number of cofactors. It forms dimeric complexes.

It localises to the cellular thylakoid membrane. In terms of biological role, one of the components of the core complex of photosystem II (PSII). PSII is a light-driven water:plastoquinone oxidoreductase that uses light energy to abstract electrons from H(2)O, generating O(2) and a proton gradient subsequently used for ATP formation. It consists of a core antenna complex that captures photons, and an electron transfer chain that converts photonic excitation into a charge separation. This subunit is found at the monomer-monomer interface and is required for correct PSII assembly and/or dimerization. The sequence is that of Photosystem II reaction center protein L from Rippkaea orientalis (strain PCC 8801 / RF-1) (Cyanothece sp. (strain PCC 8801)).